The following is a 256-amino-acid chain: Ubiquinone/menaquinone biosynthesis C-methyltransferase UbiE (256 aa).

S-adenosyl-L-methionine-binding positions include T79, D100, and 128-129 (DA).

Belongs to the class I-like SAM-binding methyltransferase superfamily. MenG/UbiE family.

It carries out the reaction a 2-demethylmenaquinol + S-adenosyl-L-methionine = a menaquinol + S-adenosyl-L-homocysteine + H(+). It catalyses the reaction a 2-methoxy-6-(all-trans-polyprenyl)benzene-1,4-diol + S-adenosyl-L-methionine = a 5-methoxy-2-methyl-3-(all-trans-polyprenyl)benzene-1,4-diol + S-adenosyl-L-homocysteine + H(+). It functions in the pathway quinol/quinone metabolism; menaquinone biosynthesis; menaquinol from 1,4-dihydroxy-2-naphthoate: step 2/2. Its pathway is cofactor biosynthesis; ubiquinone biosynthesis. In terms of biological role, methyltransferase required for the conversion of demethylmenaquinol (DMKH2) to menaquinol (MKH2) and the conversion of 2-polyprenyl-6-methoxy-1,4-benzoquinol (DDMQH2) to 2-polyprenyl-3-methyl-6-methoxy-1,4-benzoquinol (DMQH2). In Pseudomonas aeruginosa (strain LESB58), this protein is Ubiquinone/menaquinone biosynthesis C-methyltransferase UbiE.